We begin with the raw amino-acid sequence, 448 residues long: RING finger protein 44 (448 aa).

An RING-type; atypical zinc finger spans residues 396-437 (CVVCFSDFESRQLLRVLPCNHEFHAKCVDKWLKTNRTCPICR).

The polypeptide is RING finger protein 44 (rnf44) (Danio rerio (Zebrafish)).